Reading from the N-terminus, the 423-residue chain is Glutamyl-tRNA reductase (423 aa).

Substrate is bound by residues 51 to 54 (TCNR), serine 99, 104 to 106 (EDQ), and glutamine 110. Catalysis depends on cysteine 52, which acts as the Nucleophile. 179–184 (GSGEMG) contacts NADP(+).

The protein belongs to the glutamyl-tRNA reductase family. Homodimer.

It catalyses the reaction (S)-4-amino-5-oxopentanoate + tRNA(Glu) + NADP(+) = L-glutamyl-tRNA(Glu) + NADPH + H(+). Its pathway is porphyrin-containing compound metabolism; protoporphyrin-IX biosynthesis; 5-aminolevulinate from L-glutamyl-tRNA(Glu): step 1/2. Its function is as follows. Catalyzes the NADPH-dependent reduction of glutamyl-tRNA(Glu) to glutamate 1-semialdehyde (GSA). This chain is Glutamyl-tRNA reductase, found in Methanoculleus marisnigri (strain ATCC 35101 / DSM 1498 / JR1).